The sequence spans 463 residues: uncharacterized protein (463 aa).

A TRAM domain is found at 9–67; sequence VLKKGQRFPLTIKRLGINGEGVGYFKRHVVFVPGALPGEEVVVEVTDVKPRFAEASIRK. 4 residues coordinate [4Fe-4S] cluster: cysteine 80, cysteine 86, cysteine 89, and cysteine 169. S-adenosyl-L-methionine contacts are provided by glutamine 293, tyrosine 322, aspartate 343, and aspartate 391. Residue cysteine 418 is the Nucleophile of the active site.

This sequence belongs to the class I-like SAM-binding methyltransferase superfamily. RNA M5U methyltransferase family.

This is an uncharacterized protein from Halalkalibacterium halodurans (strain ATCC BAA-125 / DSM 18197 / FERM 7344 / JCM 9153 / C-125) (Bacillus halodurans).